The following is a 484-amino-acid chain: Chromosomal replication initiator protein DnaA (484 aa).

Positions Met1–Thr73 are domain I, interacts with DnaA modulators. The domain II stretch occupies residues Thr73 to Pro140. The tract at residues Phe141 to Ile357 is domain III, AAA+ region. 4 residues coordinate ATP: Gly185, Gly187, Lys188, and Thr189. The segment at Asp358–Asn484 is domain IV, binds dsDNA.

The protein belongs to the DnaA family. As to quaternary structure, oligomerizes as a right-handed, spiral filament on DNA at oriC.

Its subcellular location is the cytoplasm. Its function is as follows. Plays an essential role in the initiation and regulation of chromosomal replication. ATP-DnaA binds to the origin of replication (oriC) to initiate formation of the DNA replication initiation complex once per cell cycle. Binds the DnaA box (a 9 base pair repeat at the origin) and separates the double-stranded (ds)DNA. Forms a right-handed helical filament on oriC DNA; dsDNA binds to the exterior of the filament while single-stranded (ss)DNA is stabiized in the filament's interior. The ATP-DnaA-oriC complex binds and stabilizes one strand of the AT-rich DNA unwinding element (DUE), permitting loading of DNA polymerase. After initiation quickly degrades to an ADP-DnaA complex that is not apt for DNA replication. Binds acidic phospholipids. This is Chromosomal replication initiator protein DnaA from Borrelia turicatae (strain 91E135).